We begin with the raw amino-acid sequence, 334 residues long: Beta-hexosaminidase (334 aa).

Residues Asp60, Arg68, Arg133, and 163-164 (KH) contribute to the substrate site. The Proton donor/acceptor role is filled by His176. Asp247 (nucleophile) is an active-site residue.

This sequence belongs to the glycosyl hydrolase 3 family. NagZ subfamily.

Its subcellular location is the cytoplasm. The catalysed reaction is Hydrolysis of terminal non-reducing N-acetyl-D-hexosamine residues in N-acetyl-beta-D-hexosaminides.. It functions in the pathway cell wall biogenesis; peptidoglycan recycling. In terms of biological role, plays a role in peptidoglycan recycling by cleaving the terminal beta-1,4-linked N-acetylglucosamine (GlcNAc) from peptide-linked peptidoglycan fragments, giving rise to free GlcNAc, anhydro-N-acetylmuramic acid and anhydro-N-acetylmuramic acid-linked peptides. The chain is Beta-hexosaminidase from Xanthomonas oryzae pv. oryzae (strain KACC10331 / KXO85).